We begin with the raw amino-acid sequence, 81 residues long: Sulfur carrier protein TusA (81 aa).

The active-site Cysteine persulfide intermediate is Cys-19.

This sequence belongs to the sulfur carrier protein TusA family. In terms of assembly, interacts with IscS.

The protein localises to the cytoplasm. It functions in the pathway tRNA modification. Sulfur carrier protein involved in sulfur trafficking in the cell. Part of a sulfur-relay system required for 2-thiolation during synthesis of 2-thiouridine of the modified wobble base 5-methylaminomethyl-2-thiouridine (mnm(5)s(2)U) in tRNA. Interacts with IscS and stimulates its cysteine desulfurase activity. Accepts an activated sulfur from IscS, which is then transferred to TusD, and thus determines the direction of sulfur flow from IscS to 2-thiouridine formation. Also appears to be involved in sulfur transfer for the biosynthesis of molybdopterin. The sequence is that of Sulfur carrier protein TusA from Enterobacter sp. (strain 638).